Consider the following 256-residue polypeptide: UPF0246 protein Maqu_2499 (256 aa).

It belongs to the UPF0246 family.

The protein is UPF0246 protein Maqu_2499 of Marinobacter nauticus (strain ATCC 700491 / DSM 11845 / VT8) (Marinobacter aquaeolei).